We begin with the raw amino-acid sequence, 132 residues long: DNA-directed RNA polymerase subunit omega (132 aa).

It belongs to the RNA polymerase subunit omega family. In terms of assembly, the RNAP catalytic core consists of 2 alpha, 1 beta, 1 beta' and 1 omega subunit. When a sigma factor is associated with the core the holoenzyme is formed, which can initiate transcription.

The enzyme catalyses RNA(n) + a ribonucleoside 5'-triphosphate = RNA(n+1) + diphosphate. Functionally, promotes RNA polymerase assembly. Latches the N- and C-terminal regions of the beta' subunit thereby facilitating its interaction with the beta and alpha subunits. In Ehrlichia ruminantium (strain Welgevonden), this protein is DNA-directed RNA polymerase subunit omega.